We begin with the raw amino-acid sequence, 99 residues long: Acylphosphatase (99 aa).

Positions 5-97 (VRQVTVQGRV…RPGERFSTLP (93 aa)) constitute an Acylphosphatase-like domain. Active-site residues include R20 and N38.

It belongs to the acylphosphatase family.

It catalyses the reaction an acyl phosphate + H2O = a carboxylate + phosphate + H(+). The sequence is that of Acylphosphatase (acyP) from Rhodopseudomonas palustris (strain BisB18).